Reading from the N-terminus, the 311-residue chain is Coproporphyrin III ferrochelatase 1 (311 aa).

Fe-coproporphyrin III contacts are provided by residues tyrosine 12, arginine 29, 45 to 46, serine 53, and tyrosine 124; that span reads RY. Residues histidine 182 and glutamate 263 each coordinate Fe(2+).

This sequence belongs to the ferrochelatase family.

It is found in the cytoplasm. The enzyme catalyses Fe-coproporphyrin III + 2 H(+) = coproporphyrin III + Fe(2+). Its pathway is porphyrin-containing compound metabolism; protoheme biosynthesis. Involved in coproporphyrin-dependent heme b biosynthesis. Catalyzes the insertion of ferrous iron into coproporphyrin III to form Fe-coproporphyrin III. The sequence is that of Coproporphyrin III ferrochelatase 1 from Bacillus thuringiensis subsp. konkukian (strain 97-27).